Consider the following 120-residue polypeptide: Small ribosomal subunit protein uS13 (120 aa).

Residues 97 to 120 (PVRGQRTKTNARTRKGKKKTVGAK) are disordered.

The protein belongs to the universal ribosomal protein uS13 family. Part of the 30S ribosomal subunit. Forms a loose heterodimer with protein S19. Forms two bridges to the 50S subunit in the 70S ribosome.

In terms of biological role, located at the top of the head of the 30S subunit, it contacts several helices of the 16S rRNA. In the 70S ribosome it contacts the 23S rRNA (bridge B1a) and protein L5 of the 50S subunit (bridge B1b), connecting the 2 subunits; these bridges are implicated in subunit movement. Contacts the tRNAs in the A and P-sites. This chain is Small ribosomal subunit protein uS13, found in Nitratiruptor sp. (strain SB155-2).